The following is a 149-amino-acid chain: SsrA-binding protein (149 aa).

Belongs to the SmpB family.

The protein localises to the cytoplasm. In terms of biological role, required for rescue of stalled ribosomes mediated by trans-translation. Binds to transfer-messenger RNA (tmRNA), required for stable association of tmRNA with ribosomes. tmRNA and SmpB together mimic tRNA shape, replacing the anticodon stem-loop with SmpB. tmRNA is encoded by the ssrA gene; the 2 termini fold to resemble tRNA(Ala) and it encodes a 'tag peptide', a short internal open reading frame. During trans-translation Ala-aminoacylated tmRNA acts like a tRNA, entering the A-site of stalled ribosomes, displacing the stalled mRNA. The ribosome then switches to translate the ORF on the tmRNA; the nascent peptide is terminated with the 'tag peptide' encoded by the tmRNA and targeted for degradation. The ribosome is freed to recommence translation, which seems to be the essential function of trans-translation. The sequence is that of SsrA-binding protein from Fervidobacterium nodosum (strain ATCC 35602 / DSM 5306 / Rt17-B1).